The following is a 292-amino-acid chain: Transforming growth factor-beta receptor type 3-like protein (292 aa).

The signal sequence occupies residues Met-1 to Thr-16. Residues Leu-17–Pro-170 form the ZP; truncated domain. Over Leu-17–Pro-244 the chain is Extracellular. Cys-85 and Cys-147 form a disulfide bridge. A disordered region spans residues Arg-160 to Ala-236. Pro residues-rich tracts occupy residues Pro-164–Arg-175 and Pro-213–Ser-222. Residues Val-245 to Leu-265 form a helical membrane-spanning segment. Residues Val-266–Gln-292 lie on the Cytoplasmic side of the membrane. Positions His-273–Gln-292 are disordered. Residues Ala-281–Gln-292 are compositionally biased toward low complexity.

In terms of processing, glycosylated. Expressed in pituitary gland gonadotrope cells.

The protein resides in the cell membrane. Expressed in gonadotrope cells, acts as an inhibin B coreceptor and regulates follicle-stimulating hormone (FSH) levels and female fertility. The chain is Transforming growth factor-beta receptor type 3-like protein from Homo sapiens (Human).